Consider the following 366-residue polypeptide: uncharacterized protein (366 aa).

The PINc domain maps to 169-280 (ILDTSVIIDG…LNKVCELQKV (112 aa)). Asp-250 is a Mg(2+) binding site. The TRAM domain occupies 295–356 (VVLPGEEMNV…LQTAAGRMIF (62 aa)).

Belongs to the ycf81 family. The protein in the central section; belongs to the PINc/VapC protein family. It depends on Mg(2+) as a cofactor.

An RNase. This is an uncharacterized protein from Bacillus subtilis (strain 168).